Reading from the N-terminus, the 187-residue chain is MIILASSSPRRREILGKFFDIKVYPSEIDERSNARSPKERALDLARKKALAVHSRFPNDTIVAADTIVVLDGEVLGKPKSEREARVMLEKLSGKVHSVITGYCIIHNGKVVGGVEETKVKFRNLSEDLIEWYLSTEEWKDKAGSYGIQGYASIFVEWIQGDYYNVVGLPIKVVVELIKLGFKPRPKR.

The active-site Proton acceptor is D65.

Belongs to the Maf family. YhdE subfamily. A divalent metal cation is required as a cofactor.

The protein localises to the cytoplasm. It catalyses the reaction dTTP + H2O = dTMP + diphosphate + H(+). The enzyme catalyses UTP + H2O = UMP + diphosphate + H(+). Functionally, nucleoside triphosphate pyrophosphatase that hydrolyzes dTTP and UTP. May have a dual role in cell division arrest and in preventing the incorporation of modified nucleotides into cellular nucleic acids. This Pyrococcus abyssi (strain GE5 / Orsay) protein is dTTP/UTP pyrophosphatase.